The following is a 302-amino-acid chain: Nudix hydrolase 5 (302 aa).

The Nudix hydrolase domain maps to 122–254 (SHRIGIGAFV…EGNEMFKLIA (133 aa)). The Nudix box motif lies at 159–180 (GTIKEGESIWAGAVREVKEETD). Positions 174 and 178 each coordinate Mg(2+).

This sequence belongs to the Nudix hydrolase family. It depends on Mg(2+) as a cofactor. Mn(2+) is required as a cofactor. Expressed in roots, stems and leaves.

Its function is as follows. Probably mediates the hydrolysis of some nucleoside diphosphate derivatives. This chain is Nudix hydrolase 5 (NUDT5), found in Arabidopsis thaliana (Mouse-ear cress).